Reading from the N-terminus, the 204-residue chain is MKNIEDLIQKAVELQSNGLVTGQIADELNVSRETVTWLLTRSKKEVAAPAPKDISVNWSNIGKSATRLHYISLALCDMVLETLEETNAEVDVVVGVAASGIPLASMMANELGADFALYHSRKGQDVVQPGQKGTISRNFGGVAGKNCVIVDDVITTGSTTMEVIEQLREMGAKPRAVAVLVDKKGADMIANVPIRSLVRIVRLD.

The protein belongs to the purine/pyrimidine phosphoribosyltransferase family. GfcR subfamily.

The polypeptide is Transcriptional regulator GfcR 1 (Methanosarcina barkeri (strain Fusaro / DSM 804)).